We begin with the raw amino-acid sequence, 81 residues long: uncharacterized protein (81 aa).

This is an uncharacterized protein from Sulfolobus islandicus filamentous virus (isolate Iceland/Hveragerdi) (SIFV).